A 274-amino-acid polypeptide reads, in one-letter code: Oxidized low-density lipoprotein receptor 1 (274 aa).

Residues 1-16 (MAVDDLKVKPMKDQPD) show a composition bias toward basic and acidic residues. The disordered stretch occupies residues 1–25 (MAVDDLKVKPMKDQPDQKSNGKKPK). The Cytoplasmic segment spans residues 1 to 31 (MAVDDLKVKPMKDQPDQKSNGKKPKGLRFLS). Residues 32 to 54 (SPWWCPAAVALGVLCLGSLMTII) traverse the membrane as a helical; Signal-anchor for type II membrane protein segment. S-palmitoyl cysteine attachment occurs at residues Cys36 and Cys46. Residues 55 to 150 (MLGMQLLQVS…SGPCPEDWLW (96 aa)) form a neck region. At 55–274 (MLGMQLLQVS…QKKANLLRSE (220 aa)) the chain is on the extracellular side. N-linked (GlcNAc...) asparagine glycosylation is found at Asn73 and Asn139. Positions 84 to 139 (QVLAQQQAEAASQESQRELKEMIETLAKRLDEKSKKQMELNHQYLNLQEALKRMDN) form a coiled coil. 3 cysteine pairs are disulfide-bonded: Cys144/Cys155, Cys172/Cys264, and Cys243/Cys256. The C-type lectin domain occupies 151–265 (HGKNCYLFSS…CILVAYSICQ (115 aa)).

As to quaternary structure, homodimer; disulfide-linked. May form a hexamer composed of 3 homodimers. Interacts with HSP70. In terms of processing, N-glycosylated.

Its subcellular location is the cell membrane. It localises to the membrane raft. The protein resides in the secreted. Receptor that mediates the recognition, internalization and degradation of oxidatively modified low density lipoprotein (oxLDL) by vascular endothelial cells. OxLDL is a marker of atherosclerosis that induces vascular endothelial cell activation and dysfunction, resulting in pro-inflammatory responses, pro-oxidative conditions and apoptosis. Its association with oxLDL induces the activation of NF-kappa-B through an increased production of intracellular reactive oxygen and a variety of pro-atherogenic cellular responses including a reduction of nitric oxide (NO) release, monocyte adhesion and apoptosis. In addition to binding oxLDL, it acts as a receptor for the HSP70 protein involved in antigen cross-presentation to naive T-cells in dendritic cells, thereby participating in cell-mediated antigen cross-presentation. Also involved in inflammatory process, by acting as a leukocyte-adhesion molecule at the vascular interface in endotoxin-induced inflammation. Also acts as a receptor for advanced glycation end (AGE) products, activated platelets, monocytes, apoptotic cells and both Gram-negative and Gram-positive bacteria. This is Oxidized low-density lipoprotein receptor 1 (OLR1) from Oryctolagus cuniculus (Rabbit).